A 264-amino-acid polypeptide reads, in one-letter code: Splicing factor U2af 38 kDa subunit (264 aa).

The segment at 12-40 adopts a C3H1-type 1 zinc-finger fold; that stretch reads EKDKVNCSFYFKIGACRHGDRCSRIHNKP. Phosphoserine is present on S19. An RRM domain is found at 44-149; sequence QTVLLQNLYV…RPVYSELSPV (106 aa). A C3H1-type 2 zinc finger spans residues 151–178; sequence DFREACCRQYEMGECTRSGFCNFMHLKP. A compositionally biased stretch (basic residues) spans 190–219; it reads RRRRARSRSRSPGRRRGSRSRSRSPGRRGG. The disordered stretch occupies residues 190 to 264; sequence RRRRARSRSR…GGGGGGGGRY (75 aa). The span at 233–251 shows a compositional bias: basic and acidic residues; that stretch reads NERDNMRGNDRGNDRDRRK. The span at 253–264 shows a compositional bias: gly residues; it reads GGGGGGGGGGRY.

The protein belongs to the splicing factor SR family. Associates with a 65 kDa protein.

The protein resides in the nucleus. Its function is as follows. Necessary for the splicing of pre-mRNA. Binds to the polypyrimidine tract of introns early during spliceosome assembly. The polypeptide is Splicing factor U2af 38 kDa subunit (U2af38) (Drosophila melanogaster (Fruit fly)).